An 87-amino-acid polypeptide reads, in one-letter code: Large ribosomal subunit protein bL31B-2/bL31B-3 (87 aa).

This sequence belongs to the bacterial ribosomal protein bL31 family. Type B subfamily. In terms of assembly, part of the 50S ribosomal subunit.

The polypeptide is Large ribosomal subunit protein bL31B-2/bL31B-3 (rpmE2-2) (Escherichia coli O157:H7).